A 146-amino-acid chain; its full sequence is MKLHELQPAPGSRKKAVRVGRGIGSGNGKTAGRGHKGQKARSGGGVRLGFEGGQTPLFRRLPKRGFTNINRKEYAVVNLDRLNIFEDGTEVTPELLLEKGVISKLKSGVKILGKGQIEKKLTVKAHKFSASAKEAIEAAGGKTEVI.

The interval 1–46 (MKLHELQPAPGSRKKAVRVGRGIGSGNGKTAGRGHKGQKARSGGGV) is disordered. Over residues 21 to 31 (RGIGSGNGKTA) the composition is skewed to gly residues.

The protein belongs to the universal ribosomal protein uL15 family. As to quaternary structure, part of the 50S ribosomal subunit.

Functionally, binds to the 23S rRNA. This chain is Large ribosomal subunit protein uL15, found in Geobacillus thermodenitrificans (strain NG80-2).